The following is a 148-amino-acid chain: Nucleoside diphosphate kinase (148 aa).

Residues Lys-9, Phe-57, Arg-85, Thr-91, Arg-102, and Asn-112 each coordinate ATP. Thr-91 carries the phosphothreonine modification. Catalysis depends on His-115, which acts as the Pros-phosphohistidine intermediate. Residue Ser-122 is modified to Phosphoserine.

Belongs to the NDK family. Homotetramer. Requires Mg(2+) as cofactor.

It localises to the cytoplasm. It carries out the reaction a 2'-deoxyribonucleoside 5'-diphosphate + ATP = a 2'-deoxyribonucleoside 5'-triphosphate + ADP. The catalysed reaction is a ribonucleoside 5'-diphosphate + ATP = a ribonucleoside 5'-triphosphate + ADP. Functionally, major role in the synthesis of nucleoside triphosphates other than ATP. The ATP gamma phosphate is transferred to the NDP beta phosphate via a ping-pong mechanism, using a phosphorylated active-site intermediate. The polypeptide is Nucleoside diphosphate kinase (Bacillus anthracis).